The primary structure comprises 140 residues: uncharacterized protein (140 aa).

This is an uncharacterized protein from Escherichia coli O157:H7.